The following is an 844-amino-acid chain: Rho guanine nucleotide exchange factor 33 (844 aa).

Basic and acidic residues-rich tracts occupy residues 1 to 13 and 101 to 113; these read MEKTKTKQGENEH and QQKIEQLQQEKRR. 3 disordered regions span residues 1–20, 101–142, and 169–189; these read MEKTKTKQGENEHMPVNNPS, QQKI…GSPF, and AQESRSVHVGDSNVKGMMGPG. Residues 54–129 adopt a coiled-coil conformation; it reads LEEKVKSCRC…AKKTQKEEHS (76 aa). A compositionally biased stretch (polar residues) spans 130-142; the sequence is SQAGPAQAQGSPF. The 176-residue stretch at 265–440 folds into the DH domain; it reads KRQTVALELL…RVFISHYTLL (176 aa). 3 disordered regions span residues 498-541, 668-687, and 702-745; these read LQPY…DWEL, RPEHPLQPLPKSATSPAGSS, and AKPL…RAAQ. Omega-N-methylarginine is present on Arg-757. Residues 787–800 show a composition bias toward basic and acidic residues; sequence DTTRFCPKEERESE. The segment at 787–844 is disordered; it reads DTTRFCPKEERESEQTSFSDQNPRQDQKGGFRSSFRKLFKKKNGNATGEDFCGPWGWW. The span at 820 to 829 shows a compositional bias: basic residues; that stretch reads SFRKLFKKKN.

May act as a guanine-nucleotide releasing factor. This Homo sapiens (Human) protein is Rho guanine nucleotide exchange factor 33 (ARHGEF33).